The sequence spans 441 residues: GTPase Der (441 aa).

EngA-type G domains lie at 3 to 167 and 176 to 351; these read PLIA…PKGS and TKIA…EQFA. Residues 9-16, 56-60, 119-122, 182-189, 229-233, and 294-297 contribute to the GTP site; these read GRPNVGKS, DTGGF, NKID, DTAGI, and NKWD. Positions 352 to 436 constitute a KH-like domain; it reads RRITTSDLNR…PMRLLFKGRE (85 aa).

This sequence belongs to the TRAFAC class TrmE-Era-EngA-EngB-Septin-like GTPase superfamily. EngA (Der) GTPase family. In terms of assembly, associates with the 50S ribosomal subunit.

GTPase that plays an essential role in the late steps of ribosome biogenesis. In Geotalea uraniireducens (strain Rf4) (Geobacter uraniireducens), this protein is GTPase Der.